The chain runs to 236 residues: 2-C-methyl-D-erythritol 4-phosphate cytidylyltransferase (236 aa).

This sequence belongs to the IspD/TarI cytidylyltransferase family. IspD subfamily.

The catalysed reaction is 2-C-methyl-D-erythritol 4-phosphate + CTP + H(+) = 4-CDP-2-C-methyl-D-erythritol + diphosphate. It functions in the pathway isoprenoid biosynthesis; isopentenyl diphosphate biosynthesis via DXP pathway; isopentenyl diphosphate from 1-deoxy-D-xylulose 5-phosphate: step 2/6. In terms of biological role, catalyzes the formation of 4-diphosphocytidyl-2-C-methyl-D-erythritol from CTP and 2-C-methyl-D-erythritol 4-phosphate (MEP). The protein is 2-C-methyl-D-erythritol 4-phosphate cytidylyltransferase of Burkholderia pseudomallei (strain 1106a).